We begin with the raw amino-acid sequence, 430 residues long: Methylthioribose kinase 1 (430 aa).

Residues 52–56, K71, and 125–127 contribute to the ATP site; these read DGNLN and RYI. A substrate-binding site is contributed by N56. D246 contributes to the substrate binding site. 263–265 contributes to the ATP binding site; the sequence is DPE. R373 is a binding site for substrate.

It belongs to the methylthioribose kinase family. Homodimer.

The catalysed reaction is 5-(methylsulfanyl)-D-ribose + ATP = 5-(methylsulfanyl)-alpha-D-ribose 1-phosphate + ADP + H(+). Its pathway is amino-acid biosynthesis; L-methionine biosynthesis via salvage pathway; S-methyl-5-thio-alpha-D-ribose 1-phosphate from S-methyl-5'-thioadenosine (hydrolase route): step 2/2. Its function is as follows. Catalyzes the phosphorylation of methylthioribose into methylthioribose-1-phosphate. The protein is Methylthioribose kinase 1 of Oryza sativa subsp. japonica (Rice).